Here is a 393-residue protein sequence, read N- to C-terminus: Succinate--CoA ligase [ADP-forming] subunit beta (393 aa).

The 237-residue stretch at 9 to 245 folds into the ATP-grasp domain; that stretch reads KMLFAQYGIP…PSQEDKCETY (237 aa). Residues Lys46, 53-55, Glu99, Ile102, and Glu107 contribute to the ATP site; that span reads GRG. Positions 200 and 214 each coordinate Mg(2+). Residues Asn265 and 322 to 324 each bind substrate; that span reads GIV.

Belongs to the succinate/malate CoA ligase beta subunit family. In terms of assembly, heterotetramer of two alpha and two beta subunits. Mg(2+) serves as cofactor.

It carries out the reaction succinate + ATP + CoA = succinyl-CoA + ADP + phosphate. It catalyses the reaction GTP + succinate + CoA = succinyl-CoA + GDP + phosphate. It functions in the pathway carbohydrate metabolism; tricarboxylic acid cycle; succinate from succinyl-CoA (ligase route): step 1/1. Succinyl-CoA synthetase functions in the citric acid cycle (TCA), coupling the hydrolysis of succinyl-CoA to the synthesis of either ATP or GTP and thus represents the only step of substrate-level phosphorylation in the TCA. The beta subunit provides nucleotide specificity of the enzyme and binds the substrate succinate, while the binding sites for coenzyme A and phosphate are found in the alpha subunit. The sequence is that of Succinate--CoA ligase [ADP-forming] subunit beta from Baumannia cicadellinicola subsp. Homalodisca coagulata.